Reading from the N-terminus, the 267-residue chain is 4-hydroxy-tetrahydrodipicolinate reductase (267 aa).

10 to 15 (GCLGKQ) contacts NAD(+). Arg37 provides a ligand contact to NADP(+). Residues 99–101 (GTT) and 122–125 (TTNV) contribute to the NAD(+) site. The active-site Proton donor/acceptor is His154. His155 serves as a coordination point for (S)-2,3,4,5-tetrahydrodipicolinate. Lys158 serves as the catalytic Proton donor. 164–165 (GT) is a binding site for (S)-2,3,4,5-tetrahydrodipicolinate.

The protein belongs to the DapB family.

It is found in the cytoplasm. The catalysed reaction is (S)-2,3,4,5-tetrahydrodipicolinate + NAD(+) + H2O = (2S,4S)-4-hydroxy-2,3,4,5-tetrahydrodipicolinate + NADH + H(+). It carries out the reaction (S)-2,3,4,5-tetrahydrodipicolinate + NADP(+) + H2O = (2S,4S)-4-hydroxy-2,3,4,5-tetrahydrodipicolinate + NADPH + H(+). It participates in amino-acid biosynthesis; L-lysine biosynthesis via DAP pathway; (S)-tetrahydrodipicolinate from L-aspartate: step 4/4. In terms of biological role, catalyzes the conversion of 4-hydroxy-tetrahydrodipicolinate (HTPA) to tetrahydrodipicolinate. The chain is 4-hydroxy-tetrahydrodipicolinate reductase from Ehrlichia chaffeensis (strain ATCC CRL-10679 / Arkansas).